Consider the following 95-residue polypeptide: MAWARDEGGAAVLEILVQPRASRTRAVGEHDGRLKIQLAAPPVDGAANAALVEFLAVALGVRRADVALLRGEAGRRKTVRVAGITAAAAVAALAP.

This sequence belongs to the UPF0235 family.

The protein is UPF0235 protein Adeh_1087 of Anaeromyxobacter dehalogenans (strain 2CP-C).